The following is a 487-amino-acid chain: Chromosomal replication initiator protein DnaA (487 aa).

The segment at 1–71 (MMHDALFERF…TSLVQSEDPD (71 aa)) is domain I, interacts with DnaA modulators. Residues 71 to 141 (DVLKVEILVR…QGGSGPLFGS (71 aa)) are domain II. The segment at 142–364 (PLDTRFTFDT…GAFNQLMFRR (223 aa)) is domain III, AAA+ region. ATP is bound by residues glycine 188, glycine 190, lysine 191, and threonine 192. The interval 365–487 (SFEPNLSVDR…LKRLINENNA (123 aa)) is domain IV, binds dsDNA.

This sequence belongs to the DnaA family. Oligomerizes as a right-handed, spiral filament on DNA at oriC.

It localises to the cytoplasm. In terms of biological role, plays an essential role in the initiation and regulation of chromosomal replication. ATP-DnaA binds to the origin of replication (oriC) to initiate formation of the DNA replication initiation complex once per cell cycle. Binds the DnaA box (a 9 base pair repeat at the origin) and separates the double-stranded (ds)DNA. Forms a right-handed helical filament on oriC DNA; dsDNA binds to the exterior of the filament while single-stranded (ss)DNA is stabiized in the filament's interior. The ATP-DnaA-oriC complex binds and stabilizes one strand of the AT-rich DNA unwinding element (DUE), permitting loading of DNA polymerase. After initiation quickly degrades to an ADP-DnaA complex that is not apt for DNA replication. Binds acidic phospholipids. The sequence is that of Chromosomal replication initiator protein DnaA from Agrobacterium fabrum (strain C58 / ATCC 33970) (Agrobacterium tumefaciens (strain C58)).